The chain runs to 380 residues: MDFNLNDEQELFVAGIRELMASENWEAYFAECDRDSVYPERFVKALADMGIDSLLIPEEHGGLDAGFVTLAAVWMELGRLGAPTYVLYQLPGGFNTFLREGTQEQIDKIMAFRGTGKQMWNSAITEPGAGSDVGSLKTTYTRRNGKIYLNGSKCFITSSAYTPYIVVMARDGASPDKPVYTEWFVDMSKPGIKVTKLEKLGLRMDSCCEITFDDVELDEKDMFGREGNGFNRVKEEFDHERFLVALTNYGTAMCAFEDAARYANQRVQFGEAIGRFQLIQEKFAHMAIKLNSMKNMLYEAAWKADNGTITSGDAAMCKYFCANAAFEVVDSAMQVLGGVGIAGNHRISRFWRDLRVDRVSGGSDEMQILTLGRAVLKQYR.

The protein belongs to the acyl-CoA dehydrogenase family. As to quaternary structure, homotetramer. FAD serves as cofactor.

It is found in the cytoplasm. The catalysed reaction is 4-(trimethylamino)butanoyl-CoA + oxidized [electron-transfer flavoprotein] + H(+) = crotonobetainyl-CoA + reduced [electron-transfer flavoprotein]. It participates in amine and polyamine metabolism; carnitine metabolism. Functionally, catalyzes the reduction of crotonobetainyl-CoA to gamma-butyrobetainyl-CoA. This Escherichia coli (strain UTI89 / UPEC) protein is Crotonobetainyl-CoA reductase.